The primary structure comprises 382 residues: 1-deoxy-D-xylulose 5-phosphate reductoisomerase (382 aa).

NADPH contacts are provided by Thr-11, Gly-12, Ser-13, Ile-14, and Asn-123. A 1-deoxy-D-xylulose 5-phosphate-binding site is contributed by Lys-124. Glu-125 provides a ligand contact to NADPH. Asp-149 contributes to the Mn(2+) binding site. 1-deoxy-D-xylulose 5-phosphate-binding residues include Ser-150, Glu-151, Ser-173, and His-196. Glu-151 contacts Mn(2+). Gly-202 is an NADPH binding site. 4 residues coordinate 1-deoxy-D-xylulose 5-phosphate: Ser-209, Asn-214, Lys-215, and Glu-218. Glu-218 lines the Mn(2+) pocket.

This sequence belongs to the DXR family. The cofactor is Mg(2+). Mn(2+) is required as a cofactor.

The enzyme catalyses 2-C-methyl-D-erythritol 4-phosphate + NADP(+) = 1-deoxy-D-xylulose 5-phosphate + NADPH + H(+). It functions in the pathway isoprenoid biosynthesis; isopentenyl diphosphate biosynthesis via DXP pathway; isopentenyl diphosphate from 1-deoxy-D-xylulose 5-phosphate: step 1/6. In terms of biological role, catalyzes the NADPH-dependent rearrangement and reduction of 1-deoxy-D-xylulose-5-phosphate (DXP) to 2-C-methyl-D-erythritol 4-phosphate (MEP). The chain is 1-deoxy-D-xylulose 5-phosphate reductoisomerase from Phocaeicola vulgatus (strain ATCC 8482 / DSM 1447 / JCM 5826 / CCUG 4940 / NBRC 14291 / NCTC 11154) (Bacteroides vulgatus).